The chain runs to 348 residues: LIM domain-containing protein unc-97 (348 aa).

LIM zinc-binding domains are found at residues 21 to 73 (CVRC…CEHD), 82 to 132 (CGKC…CREC), 146 to 196 (CHKC…CLRC), 205 to 255 (CGAC…CEQH), and 264 to 315 (CFKC…CKRC).

In terms of assembly, interacts with unc-98. Component of an integrin containing attachment complex, composed of at least pat-2, pat-3, pat-4, pat-6, unc-52, unc-97 and unc-112. Restricted to tissue types that attach to the hypodermis, specifically body wall muscles, vulval muscles, and mechanosensory neurons.

The protein localises to the cell junction. The protein resides in the adherens junction. It localises to the nucleus. In terms of biological role, component of an integrin containing attachment complex, which is required for muscle development and maintenance. Probably function in adherens junction. Affects the structural integrity of the integrin containing muscle adherens junctions and contributes to the mechanosensory functions of touch neurons. This Caenorhabditis elegans protein is LIM domain-containing protein unc-97.